Reading from the N-terminus, the 201-residue chain is Recombination protein RecR (201 aa).

The C4-type zinc finger occupies 57–72 (CADCRTFTEQEVCNIC). A Toprim domain is found at 81 to 176 (GQICVVESPA…EASRIAHGVP (96 aa)).

It belongs to the RecR family.

Functionally, may play a role in DNA repair. It seems to be involved in an RecBC-independent recombinational process of DNA repair. It may act with RecF and RecO. This Shigella boydii serotype 18 (strain CDC 3083-94 / BS512) protein is Recombination protein RecR.